The following is a 601-amino-acid chain: DNA ligase (601 aa).

Aspartate 258 lines the ATP pocket. Catalysis depends on lysine 260, which acts as the N6-AMP-lysine intermediate. The ATP site is built by arginine 265, arginine 280, glutamate 310, phenylalanine 350, arginine 427, and lysine 433. Residues 568 to 601 (DKSPEDATTTDEILEMYNKQPKKKIESPPIDESV) form a disordered region.

It belongs to the ATP-dependent DNA ligase family. The cofactor is Mg(2+).

The catalysed reaction is ATP + (deoxyribonucleotide)n-3'-hydroxyl + 5'-phospho-(deoxyribonucleotide)m = (deoxyribonucleotide)n+m + AMP + diphosphate.. Functionally, DNA ligase that seals nicks in double-stranded DNA during DNA replication, DNA recombination and DNA repair. The protein is DNA ligase of Saccharolobus islandicus (strain Y.N.15.51 / Yellowstone #2) (Sulfolobus islandicus).